A 140-amino-acid chain; its full sequence is Midkine (140 aa).

The first 22 residues, 1-22 (MQHRGFFLLALLALLVVTSAVA), serve as a signal peptide directing secretion. 5 cysteine pairs are disulfide-bonded: Cys-34–Cys-58, Cys-42–Cys-67, Cys-49–Cys-71, Cys-81–Cys-113, and Cys-91–Cys-123.

The protein belongs to the pleiotrophin family. Homodimer. Interacts with ALK. Interacts with LRP1; promotes neuronal survival. Interacts with LRP2. Interacts with NCAM1. Interacts (via C-terminal) with PTPRZ1 (via chondroitin sulfate chains); this interaction is inhibited by PTN; this interaction promotes neuronal migration. Interacts with NCL; this interaction promotes NCL clustering and lateral movements of this complex into lipid rafts leading to MDK internalization. Interacts with LRP6 and LRP8: this interaction is calcium dependent. Interacts with ITGA4. Interacts with ITGA6. Interacts with ITGB1. Interacts with ITGA4:ITGB1 complex; this interaction mediates MDK-induced osteoblast cells migration through PXN phosphorylation. Interacts with ITGA6:ITGB1 complex; this interaction mediates MDK-induced neurite outgrowth. Interacts with NOTCH2; this interactio mediates a nuclear accumulation of NOTCH2 and therefore activation of NOTCH2 signaling leading to interaction between HES1 and STAT3. Interacts with GPC2 (via heparan sulfate chain); this interaction is inhibited by heparin followed by chondroitin sulfate E; this interaction induces GPC2 clustering through heparan sulfate chain; this interaction induces neuronal cell adhesion and neurite outgrowth. Interacts with SDC3; this interaction induces SDC3 clustering; this interaction induces neuronal cell adhesion and neurite outgrowth. Interacts with SDC1. Interacts with CSPG5; this interaction promotes elongation of oligodendroglial precursor-like cells. Expressed in the follicular epithelium and granulosa cells of the ovary.

The protein localises to the secreted. Functionally, secreted protein that functions as a cytokine and growth factor and mediates its signal through cell-surface proteoglycan and non-proteoglycan receptors. Binds cell-surface proteoglycan receptors via their chondroitin sulfate (CS) groups. Thereby regulates many processes like inflammatory response, cell proliferation, cell adhesion, cell growth, cell survival, tissue regeneration, cell differentiation and cell migration. Participates in inflammatory processes by exerting two different activities. Firstly, mediates neutrophils and macrophages recruitment to the sites of inflammation both by direct action by cooperating namely with ITGB2 via LRP1 and by inducing chemokine expression. This inflammation can be accompanied by epithelial cell survival and smooth muscle cell migration after renal and vessel damage, respectively. Secondly, suppresses the development of tolerogenic dendric cells thereby inhibiting the differentiation of regulatory T cells and also promote T cell expansion through NFAT signaling and Th1 cell differentiation. Promotes tissue regeneration after injury or trauma. After heart damage negatively regulates the recruitment of inflammatory cells and mediates cell survival through activation of anti-apoptotic signaling pathways via MAPKs and AKT pathways through the activation of angiogenesis. Also facilitates liver regeneration as well as bone repair by recruiting macrophage at trauma site and by promoting cartilage development by facilitating chondrocyte differentiation. Plays a role in brain by promoting neural precursor cells survival and growth through interaction with heparan sulfate proteoglycans. Binds PTPRZ1 and promotes neuronal migration and embryonic neurons survival. Binds SDC3 or GPC2 and mediates neurite outgrowth and cell adhesion. Binds chondroitin sulfate E and heparin leading to inhibition of neuronal cell adhesion induced by binding with GPC2. Binds CSPG5 and promotes elongation of oligodendroglial precursor-like cells. Also binds ITGA6:ITGB1 complex; this interaction mediates MDK-induced neurite outgrowth. Binds LRP1; promotes neuronal survival. Binds ITGA4:ITGB1 complex; this interaction mediates MDK-induced osteoblast cells migration through PXN phosphorylation. Binds anaplastic lymphoma kinase (ALK) which induces ALK activation and subsequent phosphorylation of the insulin receptor substrate (IRS1), followed by the activation of mitogen-activated protein kinase (MAPK) and PI3-kinase, and the induction of cell proliferation. Promotes epithelial to mesenchymal transition through interaction with NOTCH2. During arteriogenesis, plays a role in vascular endothelial cell proliferation by inducing VEGFA expression and release which in turn induces nitric oxide synthase expression. Moreover activates vasodilation through nitric oxide synthase activation. Negatively regulates bone formation in response to mechanical load by inhibiting Wnt/beta-catenin signaling in osteoblasts. In addition plays a role in hippocampal development, working memory, auditory response, early fetal adrenal gland development and the female reproductive system. The protein is Midkine of Mus musculus (Mouse).